The following is a 601-amino-acid chain: MPSSLFADLERNGSGGGGGGGGGGGGGGSGGGETLDDQRALQLALDQLSLLGLDSDEGASLYDSEPRKKSVNMTECVPVPSSEHVAEIVGRQGGSGRDGDRRGFSISPTPSLEPWLPGCKIKALRAKTNTYIKTPVRGEEPVFVVTGRKEDVAMARREIISAAEHFSMIRASRNKNTALNGAVPGPPNLPGQTTIQVRVPYRVVGLVVGPKGATIKRIQQQTHTYIVTPSRDKEPVFEVTGMPENVDRAREEIEAHIALRTGGIIELTDENDFHANGTDVGFDLHHGSGGSGPGSLWSKPTPSITPTPGRKPFSSYRNDSSSSLGSASTDSYFGGGTSGSAAATSRLADYSPPSPALSFAHNGNNNNNGNGYTYTAGEASVPSPDGGPELQPTFDPAPAPPPGTPLLWAQFERSPGGGSAAPVSSSCSSSASSSASSSSVVFPGGGASSTPSNANLGLLVHRRLHPGTSCPRLSPPLHMATGAGEHHLARRVRSDPGGGGLAYAAYANGLGTQLPGLPSSDTSGSSSSSSSSSSSSSSSSGLRRKGSRDCSVCFESEVIAALVPCGHNLFCMECANRICEKSEPECPVCHTAVTQAIRIFS.

Disordered regions lie at residues 1 to 39 (MPSS…DDQR) and 90 to 109 (GRQG…ISPT). The residue at position 4 (Ser-4) is a Phosphoserine. Positions 13-33 (GSGGGGGGGGGGGGGGSGGGE) are enriched in gly residues. KH domains are found at residues 98–159 (DGDR…RREI) and 192–253 (QTTI…REEI). Disordered stretches follow at residues 284-332 (LHHG…TDSY) and 344-448 (TSRL…GGAS). Position 320 is a phosphoserine (Ser-320). 2 stretches are compositionally biased toward low complexity: residues 320–331 (SSSSLGSASTDS) and 362–371 (NGNNNNNGNG). Residues 395–404 (DPAPAPPPGT) show a composition bias toward pro residues. The segment covering 420–442 (AAPVSSSCSSSASSSASSSSVVF) has biased composition (low complexity). The residue at position 494 (Ser-494) is a Phosphoserine. The disordered stretch occupies residues 514–546 (LPGLPSSDTSGSSSSSSSSSSSSSSSSGLRRKG). Positions 519–540 (SSDTSGSSSSSSSSSSSSSSSS) are enriched in low complexity. The RING-type zinc finger occupies 550-590 (CSVCFESEVIAALVPCGHNLFCMECANRICEKSEPECPVCH).

Phosphorylation at Ser-494 creates a docking site for 14-3-3, which stabilizes the protein and modulates its ability to bind RNA.

The protein resides in the cytoplasm. It is found in the nucleus. The protein localises to the P-body. Its subcellular location is the cytoplasmic granule. RNA-binding protein. May be involved in post-transcriptional regulatory mechanisms. The sequence is that of RNA-binding protein MEX3B (Mex3b) from Mus musculus (Mouse).